We begin with the raw amino-acid sequence, 268 residues long: Orotidine 5'-phosphate decarboxylase (268 aa).

Substrate is bound by residues D37, 59–61 (KTH), 91–100 (DRKFADIGNT), Y217, and R235. Residue K93 is the Proton donor of the active site.

This sequence belongs to the OMP decarboxylase family.

It catalyses the reaction orotidine 5'-phosphate + H(+) = UMP + CO2. Its pathway is pyrimidine metabolism; UMP biosynthesis via de novo pathway; UMP from orotate: step 2/2. The protein is Orotidine 5'-phosphate decarboxylase (URA4) of Maudiozyma exigua (Yeast).